The following is a 248-amino-acid chain: 3-deoxy-manno-octulosonate cytidylyltransferase (248 aa).

This sequence belongs to the KdsB family.

The protein localises to the cytoplasm. It catalyses the reaction 3-deoxy-alpha-D-manno-oct-2-ulosonate + CTP = CMP-3-deoxy-beta-D-manno-octulosonate + diphosphate. It participates in nucleotide-sugar biosynthesis; CMP-3-deoxy-D-manno-octulosonate biosynthesis; CMP-3-deoxy-D-manno-octulosonate from 3-deoxy-D-manno-octulosonate and CTP: step 1/1. The protein operates within bacterial outer membrane biogenesis; lipopolysaccharide biosynthesis. Functionally, activates KDO (a required 8-carbon sugar) for incorporation into bacterial lipopolysaccharide in Gram-negative bacteria. The protein is 3-deoxy-manno-octulosonate cytidylyltransferase of Photobacterium profundum (strain SS9).